The chain runs to 521 residues: Cell cycle checkpoint protein hpr-9 (521 aa).

3 disordered regions span residues 1 to 20 (MQAI…TRER), 318 to 375 (QHEE…NRFV), and 492 to 521 (GTET…YESR). Composition is skewed to polar residues over residues 355 to 370 (ESLS…SLPS) and 493 to 504 (TETTSKMRMSQQ).

The protein belongs to the rad9 family. Putative component of the toroidal 9-1-1 (RAD9-RAD1-HUS1) complex, composed of hpr-9, mrt-2 and hus-1.

Functionally, may be a component of the 9-1-1 cell-cycle checkpoint response complex that plays a major role in DNA repair. The protein is Cell cycle checkpoint protein hpr-9 of Caenorhabditis elegans.